A 144-amino-acid chain; its full sequence is Putative golgin subfamily A member 2B (144 aa).

2 disordered regions span residues 1–20 (MDSE…PEDL) and 95–132 (SCGR…EAAG). The span at 110 to 131 (AEGGGVHQQAGPGQGRGEGEAA) shows a compositional bias: gly residues.

This sequence belongs to the GOLGA2 family.

The polypeptide is Putative golgin subfamily A member 2B (GOLGA2P5) (Homo sapiens (Human)).